The sequence spans 422 residues: Enolase (422 aa).

Gln162 serves as a coordination point for (2R)-2-phosphoglycerate. Glu204 functions as the Proton donor in the catalytic mechanism. The Mg(2+) site is built by Asp241, Glu284, and Asp311. Positions 336, 365, 366, and 387 each coordinate (2R)-2-phosphoglycerate. Lys336 (proton acceptor) is an active-site residue.

This sequence belongs to the enolase family. It depends on Mg(2+) as a cofactor.

Its subcellular location is the cytoplasm. It is found in the secreted. The protein resides in the cell surface. It carries out the reaction (2R)-2-phosphoglycerate = phosphoenolpyruvate + H2O. It participates in carbohydrate degradation; glycolysis; pyruvate from D-glyceraldehyde 3-phosphate: step 4/5. Its function is as follows. Catalyzes the reversible conversion of 2-phosphoglycerate (2-PG) into phosphoenolpyruvate (PEP). It is essential for the degradation of carbohydrates via glycolysis. The sequence is that of Enolase from Bartonella tribocorum (strain CIP 105476 / IBS 506).